The chain runs to 198 residues: MPHESRVGRRRSTTPHHISDVAIELFAAHGFTDVSVDDIARAAGIARRTLFRYYASKNAIPWGDFSTHLAQLQGLLDNIDSRIQLRDALRAALLAFNTFDESETIRHRKRMRVILQTPELQAYSMTMYAGWREVIAKFVARRSGGKTTDFMPQTVAWTMLGVALSAYEHWLRDESVSLTEALGAAFDVVGAGLDRLNQ.

An HTH tetR-type domain is found at 12-72; that stretch reads STTPHHISDV…GDFSTHLAQL (61 aa). The segment at residues 35–54 is a DNA-binding region (H-T-H motif); sequence SVDDIARAAGIARRTLFRYY.

In terms of biological role, may regulate a gene cluster involved in mycofactocin expression. Mycofactocin is a conserved polypeptide that might serve as an electron carrier. The protein is Putative mycofactocin biosynthesis transcriptional regulator MftR (mftR) of Mycobacterium tuberculosis (strain ATCC 25618 / H37Rv).